A 241-amino-acid chain; its full sequence is Adenosylcobinamide-GDP ribazoletransferase (241 aa).

5 consecutive transmembrane segments (helical) span residues isoleucine 24–tyrosine 44, phenylalanine 48–phenylalanine 68, valine 103–isoleucine 123, valine 175–isoleucine 195, and isoleucine 218–phenylalanine 238.

The protein belongs to the CobS family. The cofactor is Mg(2+).

The protein resides in the cell membrane. It catalyses the reaction alpha-ribazole + adenosylcob(III)inamide-GDP = adenosylcob(III)alamin + GMP + H(+). It carries out the reaction alpha-ribazole 5'-phosphate + adenosylcob(III)inamide-GDP = adenosylcob(III)alamin 5'-phosphate + GMP + H(+). Its pathway is cofactor biosynthesis; adenosylcobalamin biosynthesis; adenosylcobalamin from cob(II)yrinate a,c-diamide: step 7/7. Joins adenosylcobinamide-GDP and alpha-ribazole to generate adenosylcobalamin (Ado-cobalamin). Also synthesizes adenosylcobalamin 5'-phosphate from adenosylcobinamide-GDP and alpha-ribazole 5'-phosphate. This is Adenosylcobinamide-GDP ribazoletransferase from Picrophilus torridus (strain ATCC 700027 / DSM 9790 / JCM 10055 / NBRC 100828 / KAW 2/3).